Consider the following 233-residue polypeptide: 7-cyano-7-deazaguanine synthase (233 aa).

Position 7–17 (7–17 (CSGGLDSVSLA)) interacts with ATP. The Zn(2+) site is built by Cys-185, Cys-193, Cys-196, and Cys-199.

The protein belongs to the QueC family. The cofactor is Zn(2+).

It catalyses the reaction 7-carboxy-7-deazaguanine + NH4(+) + ATP = 7-cyano-7-deazaguanine + ADP + phosphate + H2O + H(+). It participates in purine metabolism; 7-cyano-7-deazaguanine biosynthesis. In terms of biological role, catalyzes the ATP-dependent conversion of 7-carboxy-7-deazaguanine (CDG) to 7-cyano-7-deazaguanine (preQ(0)). In Paracoccus denitrificans (strain Pd 1222), this protein is 7-cyano-7-deazaguanine synthase.